Consider the following 306-residue polypeptide: Cytochrome P450 monooxygenase aclO (306 aa).

Residue cysteine 237 coordinates heme.

The protein belongs to the cytochrome P450 family. Requires heme as cofactor.

The protein operates within mycotoxin biosynthesis. Its function is as follows. Cytochrome P450 monooxygenase; part of the gene cluster that mediates the biosynthesis of aspirochlorine (or antibiotic A30641), an unusual halogenated spiro compound with distinctive antifungal properties due to selective inhibition of protein biosynthesis, and which is also active against bacteria, viruses, and murine tumor cells. The non-ribosomal peptide synthetase (NRPS) aclP is responsible the formation of the diketopiperazine (DKP) core from the condensation of 2 phenylalanine residues. One Phe residue is tailored into chlorotyrosine by hydroxylation and chlorination, whereas the second Phe undergoes an unprecedented C-C bond cleavage to be converted into glycine. After formation of the DKP, sulfur is incorporated into the DKP by conjugation with glutathione by aclG, followed by its stepwise degradation to the thiol by aclI, aclJ and aclK, and the dithiol oxidation by aclT. In addition, oxygenases (aclB, aclC, aclL and aclO) and O-methyltransferases (aclM and aclU) act as tailoring enzymes to produce the intermediate dechloroaspirochlorine. Ultimately, chlorination of dechloroaspirochlorine by the halogenase aclH is the last step in the aspirochlorine pathway. The sequence is that of Cytochrome P450 monooxygenase aclO from Aspergillus oryzae (strain ATCC 42149 / RIB 40) (Yellow koji mold).